Consider the following 189-residue polypeptide: FUN14 domain-containing protein 2 (189 aa).

Residues 1–80 (METSAPRAGS…GQESGPSAEK (80 aa)) are Cytoplasmic-facing. Ser-10 and Ser-53 each carry phosphoserine. The chain crosses the membrane as a helical span at residues 81–101 (YSVATQLFIGGVTGWCTGFIF). Residues 102–107 (QNVGKL) are Mitochondrial intermembrane-facing. A helical membrane pass occupies residues 108–128 (AATAVGGGFFLLQLANHTGYI). The Cytoplasmic segment spans residues 129–164 (KVDWQRVEKDMKKAKEQLKIRKSNQMPTEVRSKAEE). Ser-151 carries the post-translational modification Phosphoserine. The chain crosses the membrane as a helical span at residues 165–185 (VVSFVKKNVLVTGGFFGGFLL). Residues 186 to 189 (GMAS) are Mitochondrial intermembrane-facing.

This sequence belongs to the FUN14 family.

It localises to the mitochondrion outer membrane. The protein localises to the nucleus. Its function is as follows. Binds directly and specifically 1,2-Diacyl-sn-glycero-3-phospho-(1'-myo-inositol-3',4',5'-bisphosphate) (PIP3) leading to the recruitment of PIP3 to mitochondria and may play a role in the regulation of the platelet activation via AKT/GSK3B/cGMP signaling pathways. May act as transcription factor that regulates SREBP1 (isoform SREBP-1C) expression in order to modulate triglyceride (TG) homeostasis in hepatocytes. The sequence is that of FUN14 domain-containing protein 2 from Macaca mulatta (Rhesus macaque).